A 171-amino-acid polypeptide reads, in one-letter code: MDNRYPIGQFNCPSEVQEKDIQMWIKEITTLPSRLHALTVSLDELELTKTYRENSWNVRQLIHHISDSHLNGYMRMKLALTEDNPVVKTYEESEWAKLIDYELPIRVSLQLLESLHERWTYLLKNLTATQLQRTYQYPDGSIMRIEQSIALYAWHGNHHLAHIQQALIRTK.

Residues H64, H155, and H159 each coordinate Zn(2+).

The protein belongs to the metal hydrolase YfiT family. In terms of assembly, homodimer. Requires Zn(2+) as cofactor.

Its subcellular location is the cytoplasm. In terms of biological role, possible metal-dependent hydrolase. The polypeptide is Putative metal-dependent hydrolase BH0277 (Halalkalibacterium halodurans (strain ATCC BAA-125 / DSM 18197 / FERM 7344 / JCM 9153 / C-125) (Bacillus halodurans)).